Reading from the N-terminus, the 762-residue chain is Anhydrosialidase (762 aa).

Residues 1–27 form the signal peptide; the sequence is MGRIGKKAMAIALVSAVMVTPLNVCAT. A substrate-binding site is contributed by arginine 293. Aspartate 318 (proton acceptor) is an active-site residue. 3 BNR repeats span residues 328–339, 511–522, and 571–582; these read AKSTDGGNTWSE, RYSDDEGASWSD, and MYSDDHGDNWTY. Glutamate 595 is an active-site residue. Arginine 611 provides a ligand contact to substrate. The BNR 4 repeat unit spans residues 620-631; sequence VTSIDGGETWSD. Residue arginine 673 coordinates substrate. Residue tyrosine 713 is the Nucleophile of the active site.

Belongs to the glycosyl hydrolase 33 family.

It localises to the secreted. The protein localises to the extracellular space. It carries out the reaction Elimination of alpha-sialyl groups in N-acetylneuraminic acid glycosides, releasing 2,7-anhydro-alpha-N-acetylneuraminate.. This is Anhydrosialidase from Macrobdella decora (North American leech).